We begin with the raw amino-acid sequence, 97 residues long: AAPVEFTVEKGSDEKNLALSIKYNKEGDSMAEVELKEHGSNEWLALKKNGDGVWEIKSDKPLKGPFNFRFVSEKGMRNVFDDVVPADFKVGTTYKPE.

The Expansin-like CBD domain occupies 15–96 (KNLALSIKYN…DFKVGTTYKP (82 aa)).

It belongs to the expansin family. Expansin B subfamily.

The protein resides in the secreted. The protein is Pollen allergen Lol p 2-A of Lolium perenne (Perennial ryegrass).